A 272-amino-acid polypeptide reads, in one-letter code: Elongation factor Ts (272 aa).

The tract at residues 76–79 (TDFV) is involved in Mg(2+) ion dislocation from EF-Tu.

The protein belongs to the EF-Ts family.

The protein resides in the cytoplasm. Associates with the EF-Tu.GDP complex and induces the exchange of GDP to GTP. It remains bound to the aminoacyl-tRNA.EF-Tu.GTP complex up to the GTP hydrolysis stage on the ribosome. In Corynebacterium jeikeium (strain K411), this protein is Elongation factor Ts.